A 177-amino-acid polypeptide reads, in one-letter code: ATP synthase subunit b, chloroplastic (177 aa).

A helical transmembrane segment spans residues 22–42 (ILETNIINLAAVVGIVVFFVG).

Belongs to the ATPase B chain family. F-type ATPases have 2 components, F(1) - the catalytic core - and F(0) - the membrane proton channel. F(1) has five subunits: alpha(3), beta(3), gamma(1), delta(1), epsilon(1). F(0) has four main subunits: a(1), b(1), b'(1) and c(10-14). The alpha and beta chains form an alternating ring which encloses part of the gamma chain. F(1) is attached to F(0) by a central stalk formed by the gamma and epsilon chains, while a peripheral stalk is formed by the delta, b and b' chains.

The protein localises to the plastid. It is found in the chloroplast thylakoid membrane. F(1)F(0) ATP synthase produces ATP from ADP in the presence of a proton or sodium gradient. F-type ATPases consist of two structural domains, F(1) containing the extramembraneous catalytic core and F(0) containing the membrane proton channel, linked together by a central stalk and a peripheral stalk. During catalysis, ATP synthesis in the catalytic domain of F(1) is coupled via a rotary mechanism of the central stalk subunits to proton translocation. In terms of biological role, component of the F(0) channel, it forms part of the peripheral stalk, linking F(1) to F(0). This is ATP synthase subunit b, chloroplastic from Oedogonium cardiacum (Filamentous green alga).